Reading from the N-terminus, the 96-residue chain is uncharacterized protein (96 aa).

The CBS domain maps to 57–96 (MTKKVRTTKKDASISDAAALMDKHNVNRLPVVDENNKLVL).

This is an uncharacterized protein from Methanobacterium ivanovii.